We begin with the raw amino-acid sequence, 156 residues long: Arginine repressor (156 aa).

The protein belongs to the ArgR family.

The protein resides in the cytoplasm. Its pathway is amino-acid biosynthesis; L-arginine biosynthesis [regulation]. Its function is as follows. Regulates arginine biosynthesis genes. The sequence is that of Arginine repressor from Shewanella halifaxensis (strain HAW-EB4).